The primary structure comprises 600 residues: Aspartate--tRNA(Asp/Asn) ligase (600 aa).

Residue E174 coordinates L-aspartate. Residues 198-201 (QLFK) are aspartate. R220 is a binding site for L-aspartate. Residues 220 to 222 (RDE) and Q229 each bind ATP. An L-aspartate-binding site is contributed by H457. An ATP-binding site is contributed by E491. An L-aspartate-binding site is contributed by R498. ATP is bound at residue 543–546 (GLDR).

It belongs to the class-II aminoacyl-tRNA synthetase family. Type 1 subfamily. In terms of assembly, homodimer.

It localises to the cytoplasm. It carries out the reaction tRNA(Asx) + L-aspartate + ATP = L-aspartyl-tRNA(Asx) + AMP + diphosphate. Functionally, aspartyl-tRNA synthetase with relaxed tRNA specificity since it is able to aspartylate not only its cognate tRNA(Asp) but also tRNA(Asn). Reaction proceeds in two steps: L-aspartate is first activated by ATP to form Asp-AMP and then transferred to the acceptor end of tRNA(Asp/Asn). This Burkholderia ambifaria (strain ATCC BAA-244 / DSM 16087 / CCUG 44356 / LMG 19182 / AMMD) (Burkholderia cepacia (strain AMMD)) protein is Aspartate--tRNA(Asp/Asn) ligase.